We begin with the raw amino-acid sequence, 429 residues long: Histidine--tRNA ligase (429 aa).

The protein belongs to the class-II aminoacyl-tRNA synthetase family. Homodimer.

The protein resides in the cytoplasm. It catalyses the reaction tRNA(His) + L-histidine + ATP = L-histidyl-tRNA(His) + AMP + diphosphate + H(+). The protein is Histidine--tRNA ligase of Streptococcus pneumoniae serotype 2 (strain D39 / NCTC 7466).